The primary structure comprises 463 residues: Siroheme synthase 1 (463 aa).

The segment at M1–V203 is precorrin-2 dehydrogenase /sirohydrochlorin ferrochelatase. Residues E22–V23 and P43–H44 contribute to the NAD(+) site. S128 is modified (phosphoserine). Positions G215 to V463 are uroporphyrinogen-III C-methyltransferase. An S-adenosyl-L-methionine-binding site is contributed by P224. The Proton acceptor role is filled by D247. K269 serves as the catalytic Proton donor. S-adenosyl-L-methionine-binding positions include G300 to D302, I305, T330 to A331, M382, and G411.

This sequence in the N-terminal section; belongs to the precorrin-2 dehydrogenase / sirohydrochlorin ferrochelatase family. It in the C-terminal section; belongs to the precorrin methyltransferase family.

It carries out the reaction uroporphyrinogen III + 2 S-adenosyl-L-methionine = precorrin-2 + 2 S-adenosyl-L-homocysteine + H(+). The catalysed reaction is precorrin-2 + NAD(+) = sirohydrochlorin + NADH + 2 H(+). It catalyses the reaction siroheme + 2 H(+) = sirohydrochlorin + Fe(2+). It participates in cofactor biosynthesis; adenosylcobalamin biosynthesis; precorrin-2 from uroporphyrinogen III: step 1/1. The protein operates within cofactor biosynthesis; adenosylcobalamin biosynthesis; sirohydrochlorin from precorrin-2: step 1/1. Its pathway is porphyrin-containing compound metabolism; siroheme biosynthesis; precorrin-2 from uroporphyrinogen III: step 1/1. It functions in the pathway porphyrin-containing compound metabolism; siroheme biosynthesis; siroheme from sirohydrochlorin: step 1/1. It participates in porphyrin-containing compound metabolism; siroheme biosynthesis; sirohydrochlorin from precorrin-2: step 1/1. Multifunctional enzyme that catalyzes the SAM-dependent methylations of uroporphyrinogen III at position C-2 and C-7 to form precorrin-2 via precorrin-1. Then it catalyzes the NAD-dependent ring dehydrogenation of precorrin-2 to yield sirohydrochlorin. Finally, it catalyzes the ferrochelation of sirohydrochlorin to yield siroheme. The protein is Siroheme synthase 1 of Aeromonas hydrophila subsp. hydrophila (strain ATCC 7966 / DSM 30187 / BCRC 13018 / CCUG 14551 / JCM 1027 / KCTC 2358 / NCIMB 9240 / NCTC 8049).